A 371-amino-acid chain; its full sequence is tRNA-specific 2-thiouridylase MnmA (371 aa).

ATP is bound by residues 12 to 19 (GMSGGVDS) and Met38. The interval 98 to 100 (NPD) is interaction with target base in tRNA. Cys103 functions as the Nucleophile in the catalytic mechanism. An intrachain disulfide couples Cys103 to Cys200. Residue Gly128 participates in ATP binding. Positions 150-152 (KDQ) are interaction with tRNA. The Cysteine persulfide intermediate role is filled by Cys200. The tract at residues 312 to 313 (RY) is interaction with tRNA.

The protein belongs to the MnmA/TRMU family. In terms of assembly, interacts with TusE.

It is found in the cytoplasm. The catalysed reaction is S-sulfanyl-L-cysteinyl-[protein] + uridine(34) in tRNA + AH2 + ATP = 2-thiouridine(34) in tRNA + L-cysteinyl-[protein] + A + AMP + diphosphate + H(+). Catalyzes the 2-thiolation of uridine at the wobble position (U34) of tRNA(Lys), tRNA(Glu) and tRNA(Gln), leading to the formation of s(2)U34, the first step of tRNA-mnm(5)s(2)U34 synthesis. Sulfur is provided by IscS, via a sulfur-relay system. Binds ATP and its substrate tRNAs. In Yersinia pseudotuberculosis serotype O:1b (strain IP 31758), this protein is tRNA-specific 2-thiouridylase MnmA.